The sequence spans 94 residues: Acylphosphatase (94 aa).

The Acylphosphatase-like domain occupies 3 to 90 (RVHVIVEGRV…PDEKQFRIMY (88 aa)). Catalysis depends on residues Arg-18 and Asn-36.

This sequence belongs to the acylphosphatase family.

It catalyses the reaction an acyl phosphate + H2O = a carboxylate + phosphate + H(+). The sequence is that of Acylphosphatase (acyP) from Geobacillus thermodenitrificans (strain NG80-2).